The following is a 208-amino-acid chain: Adenylyl-sulfate kinase (208 aa).

31–38 (GLSGSGKS) contacts ATP. Ser105 (phosphoserine intermediate) is an active-site residue.

It belongs to the APS kinase family.

It carries out the reaction adenosine 5'-phosphosulfate + ATP = 3'-phosphoadenylyl sulfate + ADP + H(+). It functions in the pathway sulfur metabolism; hydrogen sulfide biosynthesis; sulfite from sulfate: step 2/3. Functionally, catalyzes the synthesis of activated sulfate. The protein is Adenylyl-sulfate kinase of Pseudomonas entomophila (strain L48).